Consider the following 165-residue polypeptide: Cytochrome b6-f complex subunit 4 (165 aa).

3 helical membrane-spanning segments follow: residues 36 to 56 (LLYI…GLAV), 95 to 115 (LLGV…PFLE), and 131 to 151 (TVFL…TLPI).

It belongs to the cytochrome b family. PetD subfamily. In terms of assembly, the 4 large subunits of the cytochrome b6-f complex are cytochrome b6, subunit IV (17 kDa polypeptide, petD), cytochrome f and the Rieske protein, while the 4 small subunits are petG, petL, petM and petN. The complex functions as a dimer.

Its subcellular location is the plastid. It localises to the chloroplast thylakoid membrane. Component of the cytochrome b6-f complex, which mediates electron transfer between photosystem II (PSII) and photosystem I (PSI), cyclic electron flow around PSI, and state transitions. This Populus alba (White poplar) protein is Cytochrome b6-f complex subunit 4.